The following is a 738-amino-acid chain: Catalase-peroxidase (738 aa).

Positions 1-13 (MDGQDIGAGGGCP) are enriched in gly residues. The disordered stretch occupies residues 1–26 (MDGQDIGAGGGCPFSGANTNKGRRSN). The segment at residues 98–226 (WHSAGTYRTA…LAAVQMGLIY (129 aa)) is a cross-link (tryptophyl-tyrosyl-methioninium (Trp-Tyr) (with M-252)). The active-site Proton acceptor is the His-99. The segment at residues 226-252 (YVNPEGPDGNPDPIASGRDIRETFARM) is a cross-link (tryptophyl-tyrosyl-methioninium (Tyr-Met) (with W-98)). Heme b is bound at residue His-267.

It belongs to the peroxidase family. Peroxidase/catalase subfamily. In terms of assembly, homodimer or homotetramer. Heme b serves as cofactor. Post-translationally, formation of the three residue Trp-Tyr-Met cross-link is important for the catalase, but not the peroxidase activity of the enzyme.

The enzyme catalyses H2O2 + AH2 = A + 2 H2O. It catalyses the reaction 2 H2O2 = O2 + 2 H2O. Functionally, bifunctional enzyme with both catalase and broad-spectrum peroxidase activity. The polypeptide is Catalase-peroxidase (Ruegeria sp. (strain TM1040) (Silicibacter sp.)).